The sequence spans 432 residues: Adenylosuccinate synthetase (432 aa).

Residues 12–18 and 40–42 contribute to the GTP site; these read GDEGKGK and GHT. Aspartate 13 (proton acceptor) is an active-site residue. Positions 13 and 40 each coordinate Mg(2+). IMP-binding positions include 13 to 16, 38 to 41, threonine 132, arginine 146, glutamine 226, threonine 241, and arginine 305; these read DEGK and NAGH. Histidine 41 functions as the Proton donor in the catalytic mechanism. Residue 301–307 participates in substrate binding; that stretch reads VVTGRKR. GTP-binding positions include arginine 307, 333–335, and 415–417; these read KLD and STS.

Belongs to the adenylosuccinate synthetase family. Homodimer. Mg(2+) serves as cofactor.

It is found in the cytoplasm. The catalysed reaction is IMP + L-aspartate + GTP = N(6)-(1,2-dicarboxyethyl)-AMP + GDP + phosphate + 2 H(+). It functions in the pathway purine metabolism; AMP biosynthesis via de novo pathway; AMP from IMP: step 1/2. Plays an important role in the de novo pathway of purine nucleotide biosynthesis. Catalyzes the first committed step in the biosynthesis of AMP from IMP. The protein is Adenylosuccinate synthetase of Rhizobium leguminosarum bv. trifolii (strain WSM2304).